The sequence spans 122 residues: MIQMQSYLDVADNSGAKEVMCIKVLGGSKRRYARIGDIIKVTVKDAIPRGKVKKGEVYDAVVVRTRKGVRRADGSLIRFDGNAAVLLNNKQEPIGTRIFGPVTRELRSEKFMKIVSLAPEVL.

It belongs to the universal ribosomal protein uL14 family. Part of the 50S ribosomal subunit. Forms a cluster with proteins L3 and L19. In the 70S ribosome, L14 and L19 interact and together make contacts with the 16S rRNA in bridges B5 and B8.

Functionally, binds to 23S rRNA. Forms part of two intersubunit bridges in the 70S ribosome. In Xanthomonas oryzae pv. oryzae (strain MAFF 311018), this protein is Large ribosomal subunit protein uL14.